A 953-amino-acid chain; its full sequence is Translation initiation factor IF-2 (953 aa).

2 disordered regions span residues 52–241 and 279–363; these read KASK…QQEA and TKLK…TERK. Composition is skewed to basic and acidic residues over residues 80–89, 98–111, and 140–188; these read TGSEHVEKTQ, FKAE…EQAA, and QGDK…ENHK. Positions 191 to 207 are enriched in polar residues; it reads RFTNQKKQGRQEPQSKS. Over residues 229–241 the composition is skewed to basic and acidic residues; sequence RQSETRFRAQQEA. Residues 282-291 are compositionally biased toward polar residues; sequence KSSNISAKST. Basic and acidic residues predominate over residues 300–317; it reads ARPEKNRELTHHSQEGQK. The span at 322 to 338 shows a compositional bias: low complexity; sequence SWNSQNQVRNQKNSNWN. Positions 339–348 are enriched in basic residues; sequence KNKKTKKGKN. Residues 454–623 enclose the tr-type G domain; that stretch reads ERAPVVTIMG…LLVAEVEELK (170 aa). Residues 463 to 470 are G1; that stretch reads GHVDHGKT. GTP is bound at residue 463–470; sequence GHVDHGKT. The interval 488–492 is G2; that stretch reads GITQH. A G3 region spans residues 509-512; it reads DTPG. GTP-binding positions include 509–513 and 563–566; these read DTPGH and NKID. Residues 563–566 are G4; that stretch reads NKID. A G5 region spans residues 599 to 601; that stretch reads SAK.

The protein belongs to the TRAFAC class translation factor GTPase superfamily. Classic translation factor GTPase family. IF-2 subfamily.

The protein resides in the cytoplasm. Functionally, one of the essential components for the initiation of protein synthesis. Protects formylmethionyl-tRNA from spontaneous hydrolysis and promotes its binding to the 30S ribosomal subunits. Also involved in the hydrolysis of GTP during the formation of the 70S ribosomal complex. The polypeptide is Translation initiation factor IF-2 (Streptococcus pyogenes serotype M4 (strain MGAS10750)).